A 1272-amino-acid chain; its full sequence is RING finger protein PFE0100w (1272 aa).

Residues 216-260 are disordered; sequence INKINDVSNNDPKKDNNEKNTSSNNITHNNYNDISNNNNNNNNIN. Positions 234–260 are enriched in low complexity; the sequence is KNTSSNNITHNNYNDISNNNNNNNNIN. One copy of the CHCR repeat lies at 608–752; sequence YIQTINYLET…GYKFIKYYPQ (145 aa). A helical membrane pass occupies residues 771-791; sequence IFIPLFLDNIDFLFMFIVKFL. Disordered regions lie at residues 842 to 862 and 908 to 970; these read NQNHNGIPSDSHNLSDDNNSQ and ENQT…IINK. Low complexity-rich tracts occupy residues 850 to 861 and 909 to 956; these read SDSHNLSDDNNS and NQTN…IQTN. Residues 957-967 are compositionally biased toward polar residues; it reads KQKGNSTTNKI. The stretch at 1146–1182 forms a coiled coil; sequence MNDMNKNINDKCIEIEKDKKELEKIKKKQLKKKYNFY. The RING-type; atypical zinc-finger motif lies at 1189 to 1224; sequence CSICKEILSVPMIHFLCKHSYHSYCLKDNNVCILCH.

Its subcellular location is the membrane. This chain is RING finger protein PFE0100w, found in Plasmodium falciparum (isolate 3D7).